A 360-amino-acid chain; its full sequence is Probable dual-specificity RNA methyltransferase RlmN (360 aa).

Glu91 (proton acceptor) is an active-site residue. Residues 97 to 335 (QHYGQSVCVT…CVVRQEHGTD (239 aa)) enclose the Radical SAM core domain. Cys104 and Cys340 are joined by a disulfide. 3 residues coordinate [4Fe-4S] cluster: Cys111, Cys115, and Cys118. Residues 163-164 (GE), Ser195, 218-220 (SLH), and Asn296 contribute to the S-adenosyl-L-methionine site. Residue Cys340 is the S-methylcysteine intermediate of the active site.

This sequence belongs to the radical SAM superfamily. RlmN family. It depends on [4Fe-4S] cluster as a cofactor.

It localises to the cytoplasm. It carries out the reaction adenosine(2503) in 23S rRNA + 2 reduced [2Fe-2S]-[ferredoxin] + 2 S-adenosyl-L-methionine = 2-methyladenosine(2503) in 23S rRNA + 5'-deoxyadenosine + L-methionine + 2 oxidized [2Fe-2S]-[ferredoxin] + S-adenosyl-L-homocysteine. It catalyses the reaction adenosine(37) in tRNA + 2 reduced [2Fe-2S]-[ferredoxin] + 2 S-adenosyl-L-methionine = 2-methyladenosine(37) in tRNA + 5'-deoxyadenosine + L-methionine + 2 oxidized [2Fe-2S]-[ferredoxin] + S-adenosyl-L-homocysteine. Its function is as follows. Specifically methylates position 2 of adenine 2503 in 23S rRNA and position 2 of adenine 37 in tRNAs. This Streptococcus equi subsp. equi (strain 4047) protein is Probable dual-specificity RNA methyltransferase RlmN.